The chain runs to 93 residues: MADIMDIKSILYTEKSLGLQEKGVLVVQTAQNVTKNQLKEVFKTYFGFEPLKINSLKQEGKVKRFRGKLGQRKSFKKFYVKVPEGASIAALGA.

The protein belongs to the universal ribosomal protein uL23 family. As to quaternary structure, part of the 50S ribosomal subunit. Contacts protein L29, and trigger factor when it is bound to the ribosome.

One of the early assembly proteins it binds 23S rRNA. One of the proteins that surrounds the polypeptide exit tunnel on the outside of the ribosome. Forms the main docking site for trigger factor binding to the ribosome. The polypeptide is Large ribosomal subunit protein uL23 (Helicobacter pylori (strain P12)).